A 493-amino-acid chain; its full sequence is ATP synthase subunit beta, chloroplastic (493 aa).

ATP is bound at residue 170-177 (GGAGVGKT).

Belongs to the ATPase alpha/beta chains family. In terms of assembly, F-type ATPases have 2 components, CF(1) - the catalytic core - and CF(0) - the membrane proton channel. CF(1) has five subunits: alpha(3), beta(3), gamma(1), delta(1), epsilon(1). CF(0) has four main subunits: a(1), b(1), b'(1) and c(9-12).

It is found in the plastid. The protein resides in the chloroplast thylakoid membrane. The catalysed reaction is ATP + H2O + 4 H(+)(in) = ADP + phosphate + 5 H(+)(out). Its function is as follows. Produces ATP from ADP in the presence of a proton gradient across the membrane. The catalytic sites are hosted primarily by the beta subunits. In Lachenalia pusilla (Cape cowslips), this protein is ATP synthase subunit beta, chloroplastic.